The following is a 279-amino-acid chain: uncharacterized protein (279 aa).

Residues 1-28 (MGLFGGGNSKSTSNQTTNNENTNIATQG) form a disordered region. Residues 9 to 23 (SKSTSNQTTNNENTN) are compositionally biased toward low complexity. Residues 256-273 (KTLMIGIVAVSAAVGLYA) traverse the membrane as a helical segment.

It localises to the host membrane. This is an uncharacterized protein from Pseudoalteromonas espejiana (Bacteriophage PM2).